Consider the following 296-residue polypeptide: MQDRFVRRINELPKALADELLPMLGEQFCGHLDAQQVKQLCAVSAMDSHELGLALLPIAAALAKPPVSNFYVGAIAVGSGGDFYMGANLELQGEALFHSVHAEQSAISHAWLSGETQISDIIVNASPCGHCRQFMNELVQGQAIRIHLPGQDTAPLSHYLPYAFGPADLNVTAPLLSKQQTELVLESDDPLLIEALDHAGLSYAPYSQCHAAVVLETEDGASFCGRYAENAAFNPSMLPMQMALSALVRHNRSFSDIKRAVLLESSQGKISLVGATMDALHAVAVVELEHLVVDPV.

2 consecutive CMP/dCMP-type deaminase domains span residues 47–167 (DSHE…FGPA) and 186–296 (ESDD…VDPV). 88-90 (NLE) is a substrate binding site. His101 is a Zn(2+) binding site. Glu103 functions as the Proton donor in the catalytic mechanism. Zn(2+) is bound by residues Cys128 and Cys131.

It belongs to the cytidine and deoxycytidylate deaminase family. Homodimer. Zn(2+) is required as a cofactor.

It carries out the reaction cytidine + H2O + H(+) = uridine + NH4(+). The catalysed reaction is 2'-deoxycytidine + H2O + H(+) = 2'-deoxyuridine + NH4(+). Functionally, this enzyme scavenges exogenous and endogenous cytidine and 2'-deoxycytidine for UMP synthesis. The chain is Cytidine deaminase from Shewanella amazonensis (strain ATCC BAA-1098 / SB2B).